Consider the following 874-residue polypeptide: Valine--tRNA ligase (874 aa).

Residues 46–56 carry the 'HIGH' region motif; that stretch reads PNVTGHLHIGH. Residues 523 to 527 carry the 'KMSKS' region motif; it reads KMSKS. Lys526 is an ATP binding site. Residues 805 to 874 are a coiled coil; sequence DYVFQMKKAS…TLTDLKQKVK (70 aa).

This sequence belongs to the class-I aminoacyl-tRNA synthetase family. ValS type 1 subfamily. In terms of assembly, monomer.

It localises to the cytoplasm. It catalyses the reaction tRNA(Val) + L-valine + ATP = L-valyl-tRNA(Val) + AMP + diphosphate. Its function is as follows. Catalyzes the attachment of valine to tRNA(Val). As ValRS can inadvertently accommodate and process structurally similar amino acids such as threonine, to avoid such errors, it has a 'posttransfer' editing activity that hydrolyzes mischarged Thr-tRNA(Val) in a tRNA-dependent manner. The sequence is that of Valine--tRNA ligase from Ureaplasma parvum serovar 3 (strain ATCC 700970).